A 382-amino-acid chain; its full sequence is C-type lectin domain-containing protein 38 (382 aa).

Over 1 to 40 (MAIFYDDPLERLNQPIKTKSYRKKQVVQRVHVFIFDNWKL) the chain is Cytoplasmic. Residues 41-61 (ILLGILNLIFLIIAIVFAILF) form a helical membrane-spanning segment. Over 62 to 382 (FVGSADCAQL…FFLCKRAIDF (321 aa)) the chain is Extracellular. The interval 97 to 116 (NAITTTQGTPSNKTSTTTPS) is disordered. Positions 100–116 (TTTQGTPSNKTSTTTPS) are enriched in low complexity. Residues asparagine 108 and asparagine 189 are each glycosylated (N-linked (GlcNAc...) asparagine). 2 consecutive C-type lectin domains span residues 129-250 (VGTK…FVCE) and 264-377 (YNKN…FLCK). Cystine bridges form between cysteine 150–cysteine 249, cysteine 223–cysteine 241, cysteine 285–cysteine 376, and cysteine 348–cysteine 368.

In terms of tissue distribution, expressed in ventral cord motor neurons and PLM touch neurons.

The protein resides in the membrane. Involved in negative modulation of unc-40-mediated axon outgrowth. Required for proper presynaptic development in axons that have reached their targets. May function in concert with E3 ubiquitin-protein ligase rpm-1 in regulating axon outgrowth. In Caenorhabditis elegans, this protein is C-type lectin domain-containing protein 38.